Here is a 242-residue protein sequence, read N- to C-terminus: MAPYRLDVVTLAPQAFAPMGELGVIGRAFHAGRAELVLHNPRDHASDRYRKVDDEPYGGGAGMVLKPEPVFAAFDAIPVCGRRRVLLMTPQGHPLQQADLQRWATDHDQLVLLCGHYEGFDERIRTLADEEVSLGDFVLTGGELPAMTIINGVVRLLPGTVGSAESLVEESHSDGLLEHPHYTRPAEFRGMGVPEVLRSGDHGAIARWRQEQREQRTAARRPDLMQRWQQRFGADNDSEHRA.

S-adenosyl-L-methionine-binding positions include G115 and 134–139; that span reads LGDFVL. Residues 210-224 are compositionally biased toward basic and acidic residues; sequence QEQREQRTAARRPDL. The segment at 210-242 is disordered; sequence QEQREQRTAARRPDLMQRWQQRFGADNDSEHRA.

This sequence belongs to the RNA methyltransferase TrmD family. As to quaternary structure, homodimer.

The protein resides in the cytoplasm. It carries out the reaction guanosine(37) in tRNA + S-adenosyl-L-methionine = N(1)-methylguanosine(37) in tRNA + S-adenosyl-L-homocysteine + H(+). Its function is as follows. Specifically methylates guanosine-37 in various tRNAs. The polypeptide is tRNA (guanine-N(1)-)-methyltransferase (Synechococcus sp. (strain WH7803)).